The chain runs to 101 residues: MRPYELMVIIDPEVEERTVESSLQKFLNVITTDGGTIEKVDIWGRRRLAYDIKKKSEGIYAVVNFTAAPATAKELDRQLSLNETIMRTKIIRPEDQKVVAE.

The protein belongs to the bacterial ribosomal protein bS6 family.

Its function is as follows. Binds together with bS18 to 16S ribosomal RNA. The polypeptide is Small ribosomal subunit protein bS6 (Paenarthrobacter aurescens (strain TC1)).